A 74-amino-acid chain; its full sequence is Ubiquitin-like protein FUBI (74 aa).

This sequence belongs to the ubiquitin family.

This chain is Ubiquitin-like protein FUBI (FAU), found in Bos taurus (Bovine).